The chain runs to 302 residues: Nucleotide-binding protein Bamb_2855 (302 aa).

Residue 8-15 participates in ATP binding; it reads GISGSGKS. 57–60 serves as a coordination point for GTP; sequence DARS.

The protein belongs to the RapZ-like family.

In terms of biological role, displays ATPase and GTPase activities. The polypeptide is Nucleotide-binding protein Bamb_2855 (Burkholderia ambifaria (strain ATCC BAA-244 / DSM 16087 / CCUG 44356 / LMG 19182 / AMMD) (Burkholderia cepacia (strain AMMD))).